The primary structure comprises 546 residues: Chaperonin GroEL (546 aa).

ATP-binding positions include 30–33 (TLGP), Lys-51, 87–91 (DGTTT), Gly-415, 479–481 (NAA), and Asp-495.

It belongs to the chaperonin (HSP60) family. In terms of assembly, forms a cylinder of 14 subunits composed of two heptameric rings stacked back-to-back. Interacts with the co-chaperonin GroES.

It localises to the cytoplasm. The catalysed reaction is ATP + H2O + a folded polypeptide = ADP + phosphate + an unfolded polypeptide.. Its function is as follows. Together with its co-chaperonin GroES, plays an essential role in assisting protein folding. The GroEL-GroES system forms a nano-cage that allows encapsulation of the non-native substrate proteins and provides a physical environment optimized to promote and accelerate protein folding. This Pseudomonas putida (strain ATCC 700007 / DSM 6899 / JCM 31910 / BCRC 17059 / LMG 24140 / F1) protein is Chaperonin GroEL.